Here is a 161-residue protein sequence, read N- to C-terminus: Large ribosomal subunit protein uL15 (161 aa).

Residues 1–43 (MKLSDIADNAGARKKRMRVGRGIGSGKGKTSGRGGKGQTARSG) are disordered. Positions 21 to 37 (RGIGSGKGKTSGRGGKG) are enriched in gly residues.

Belongs to the universal ribosomal protein uL15 family. Part of the 50S ribosomal subunit.

Its function is as follows. Binds to the 23S rRNA. The sequence is that of Large ribosomal subunit protein uL15 from Bradyrhizobium sp. (strain ORS 278).